A 1242-amino-acid polypeptide reads, in one-letter code: Phosphorylase b kinase regulatory subunit alpha, skeletal muscle isoform (1242 aa).

Residues S630, S731, S737, S740, S760, S813, S974, S983, and S987 each carry the phosphoserine modification. The tract at residues 812–842 (LSELYVKVGEIRHWGLIRYISGILRKKVEAL) is calmodulin-binding. S1009 bears the Phosphoserine; by autocatalysis mark. Residue S1020 is modified to Phosphoserine; by PKA. A phosphoserine mark is found at S1022 and S1025. A calmodulin-binding region spans residues 1065 to 1105 (SKDSRQGQWQRRRRLDGALNRVPIGFYQKVWKILQKCHGLS). S1132 is subject to Phosphoserine. C1239 is lipidated: S-farnesyl cysteine.

This sequence belongs to the phosphorylase b kinase regulatory chain family. In terms of assembly, hexadecamer of 4 heterotetramers, each composed of alpha, beta, gamma, and delta subunits. Alpha (PHKA1 or PHKA2) and beta (PHKB) are regulatory subunits, gamma (PHKG1 or PHKG2) is the catalytic subunit, and delta is calmodulin. Post-translationally, although the final Cys may be farnesylated, the terminal tripeptide is probably not removed, and the C-terminus is not methylated.

It localises to the cell membrane. Its pathway is glycan biosynthesis; glycogen metabolism. Its activity is regulated as follows. By phosphorylation of various serine residues and by calcium. Functionally, phosphorylase b kinase catalyzes the phosphorylation of serine in certain substrates, including troponin I. The alpha chain may bind calmodulin. The sequence is that of Phosphorylase b kinase regulatory subunit alpha, skeletal muscle isoform (Phka1) from Rattus norvegicus (Rat).